We begin with the raw amino-acid sequence, 132 residues long: Small heat shock protein hspL (132 aa).

Residues 15–131 (TFTNFVSAPV…VKMSNNNKVE (117 aa)) enclose the sHSP domain.

The protein belongs to the small heat shock protein (HSP20) family.

The protein is Small heat shock protein hspL (hspL) of Dictyostelium discoideum (Social amoeba).